Reading from the N-terminus, the 372-residue chain is Cytochrome b (372 aa).

4 consecutive transmembrane segments (helical) span residues 32–52 (LGFN…CLSW), 77–99 (FIIR…IHII), 114–134 (VWFF…IGYT), and 180–200 (LHSI…AHFF). Residues H83 and H97 each contribute to the heme b site. Positions 184 and 198 each coordinate heme b. H203 contributes to the a ubiquinone binding site. The next 4 membrane-spanning stretches (helical) occupy residues 228–248 (YYLR…YYIC), 297–317 (LLFV…LIFI), 330–350 (LVLF…VLCF), and 351–371 (PLWM…VCRL).

It belongs to the cytochrome b family. In terms of assembly, the main subunits of complex b-c1 are: cytochrome b, cytochrome c1 and the Rieske protein. Requires heme b as cofactor.

Its subcellular location is the mitochondrion inner membrane. Component of the ubiquinol-cytochrome c reductase complex (complex III or cytochrome b-c1 complex) that is part of the mitochondrial respiratory chain. The b-c1 complex mediates electron transfer from ubiquinol to cytochrome c. Contributes to the generation of a proton gradient across the mitochondrial membrane that is then used for ATP synthesis. This chain is Cytochrome b (MT-CYB), found in Trypanoplasma borreli.